The following is a 325-amino-acid chain: MAAAVRCMGRALIHHQRHSLSKMVYQTSLCSCSVNIRVPNRHFAAATKSAKKTKKGAKEKTPDEKKDEIEKIKAYPYMEGEPEDDVYLKRLYPRQIYEVEKAVHLLKKFQILDFTSPKQSVYLDLTLDMALGKKKNVEPFTSVLSLPYPFASEINKVAVFTENASEVKIAEENGAAFAGGTSLIQKIWDDEIVADFYVAVPEIMPELNRLRKKLNKKYPKLSRNSIGRDIPKMLELFKNGHEIKVDEERENFLQTKIATLDMSSDQIAANLQAVINEVCRHRPLNLGPFVVRAFLRSSTSEGLLLKIDPLLPKEVKNEESEKEDA.

The N-terminal 50 residues, 1-50 (MAAAVRCMGRALIHHQRHSLSKMVYQTSLCSCSVNIRVPNRHFAAATKSA), are a transit peptide targeting the mitochondrion.

It belongs to the universal ribosomal protein uL1 family. Component of the mitochondrial large ribosomal subunit (mt-LSU). Mature mammalian 55S mitochondrial ribosomes consist of a small (28S) and a large (39S) subunit. The 28S small subunit contains a 12S ribosomal RNA (12S mt-rRNA) and 30 different proteins. The 39S large subunit contains a 16S rRNA (16S mt-rRNA), a copy of mitochondrial valine transfer RNA (mt-tRNA(Val)), which plays an integral structural role, and 52 different proteins.

It is found in the mitochondrion. This chain is Large ribosomal subunit protein uL1m (MRPL1), found in Homo sapiens (Human).